Consider the following 172-residue polypeptide: C-phycocyanin beta chain (172 aa).

N4-methylasparagine is present on asparagine 72. Cysteine 82 and cysteine 153 together coordinate (2R,3E)-phycocyanobilin.

Belongs to the phycobiliprotein family. Heterodimer of an alpha and a beta subunit, which further assembles into trimers and the trimers into hexamers. The basic functional unit of phycobiliproteins is a ring-shaped hexamer formed from two back-to-back trimers contacting via the alpha chain subunits. The trimers are composed of alpha/beta subunit heterodimers arranged around a three-fold axis of symmetry. The phycoerythrins also contain a gamma subunit which is located in the center of the hexamer. In terms of processing, contains two covalently linked bilin chromophores.

It localises to the plastid. It is found in the chloroplast thylakoid membrane. In terms of biological role, light-harvesting photosynthetic bile pigment-protein from the phycobiliprotein complex (phycobilisome, PBS). Phycocyanin is the major phycobiliprotein in the PBS rod. This is C-phycocyanin beta chain (cpcB) from Pyropia yezoensis (Susabi-nori).